A 195-amino-acid chain; its full sequence is Imidazoleglycerol-phosphate dehydratase (195 aa).

This sequence belongs to the imidazoleglycerol-phosphate dehydratase family.

The protein resides in the cytoplasm. The catalysed reaction is D-erythro-1-(imidazol-4-yl)glycerol 3-phosphate = 3-(imidazol-4-yl)-2-oxopropyl phosphate + H2O. The protein operates within amino-acid biosynthesis; L-histidine biosynthesis; L-histidine from 5-phospho-alpha-D-ribose 1-diphosphate: step 6/9. In Parafrankia sp. (strain EAN1pec), this protein is Imidazoleglycerol-phosphate dehydratase.